Reading from the N-terminus, the 296-residue chain is Diguanylate cyclase DgcS (296 aa).

Residues Gly-165–Thr-293 enclose the GGDEF domain. Asp-173, Leu-174, and Asp-216 together coordinate Mg(2+). The active site involves Asp-216.

Mg(2+) serves as cofactor.

The enzyme catalyses 2 GTP = 3',3'-c-di-GMP + 2 diphosphate. Functionally, catalyzes the synthesis of cyclic-di-GMP (c-di-GMP) via the condensation of 2 GTP molecules. May be involved in the regulation of formation of solid surface-associated biofilms and pellicles according to environmental conditions. The sequence is that of Diguanylate cyclase DgcS from Shewanella oneidensis (strain ATCC 700550 / JCM 31522 / CIP 106686 / LMG 19005 / NCIMB 14063 / MR-1).